The following is a 227-amino-acid chain: Cytochrome c oxidase subunit 2 (227 aa).

Over 1 to 14 (MAYPFQLGLQDATS) the chain is Mitochondrial intermembrane. The chain crosses the membrane as a helical span at residues 15–45 (PIMEELMNFHDHTLMIVFLISTLVLYIISLM). The Mitochondrial matrix segment spans residues 46–59 (LTTKLTHTSTMDAQ). A helical membrane pass occupies residues 60–87 (EVETVWTILPAVILIMIALPSLRILYMM). The Mitochondrial intermembrane portion of the chain corresponds to 88 to 227 (DEINNPVLTV…HFENWSTSMI (140 aa)). Cu cation is bound by residues His161, Cys196, Glu198, Cys200, His204, and Met207. Position 198 (Glu198) interacts with Mg(2+).

This sequence belongs to the cytochrome c oxidase subunit 2 family. Component of the cytochrome c oxidase (complex IV, CIV), a multisubunit enzyme composed of 14 subunits. The complex is composed of a catalytic core of 3 subunits MT-CO1, MT-CO2 and MT-CO3, encoded in the mitochondrial DNA, and 11 supernumerary subunits COX4I, COX5A, COX5B, COX6A, COX6B, COX6C, COX7A, COX7B, COX7C, COX8 and NDUFA4, which are encoded in the nuclear genome. The complex exists as a monomer or a dimer and forms supercomplexes (SCs) in the inner mitochondrial membrane with NADH-ubiquinone oxidoreductase (complex I, CI) and ubiquinol-cytochrome c oxidoreductase (cytochrome b-c1 complex, complex III, CIII), resulting in different assemblies (supercomplex SCI(1)III(2)IV(1) and megacomplex MCI(2)III(2)IV(2)). Found in a complex with TMEM177, COA6, COX18, COX20, SCO1 and SCO2. Interacts with TMEM177 in a COX20-dependent manner. Interacts with COX20. Interacts with COX16. Cu cation is required as a cofactor.

The protein resides in the mitochondrion inner membrane. The enzyme catalyses 4 Fe(II)-[cytochrome c] + O2 + 8 H(+)(in) = 4 Fe(III)-[cytochrome c] + 2 H2O + 4 H(+)(out). Its function is as follows. Component of the cytochrome c oxidase, the last enzyme in the mitochondrial electron transport chain which drives oxidative phosphorylation. The respiratory chain contains 3 multisubunit complexes succinate dehydrogenase (complex II, CII), ubiquinol-cytochrome c oxidoreductase (cytochrome b-c1 complex, complex III, CIII) and cytochrome c oxidase (complex IV, CIV), that cooperate to transfer electrons derived from NADH and succinate to molecular oxygen, creating an electrochemical gradient over the inner membrane that drives transmembrane transport and the ATP synthase. Cytochrome c oxidase is the component of the respiratory chain that catalyzes the reduction of oxygen to water. Electrons originating from reduced cytochrome c in the intermembrane space (IMS) are transferred via the dinuclear copper A center (CU(A)) of subunit 2 and heme A of subunit 1 to the active site in subunit 1, a binuclear center (BNC) formed by heme A3 and copper B (CU(B)). The BNC reduces molecular oxygen to 2 water molecules using 4 electrons from cytochrome c in the IMS and 4 protons from the mitochondrial matrix. This is Cytochrome c oxidase subunit 2 (MT-CO2) from Apodemus semotus (Taiwan field mouse).